A 108-amino-acid polypeptide reads, in one-letter code: Nucleoid-associated protein PSHAa1202 (108 aa).

Disordered stretches follow at residues 1-20 and 87-108; these read MFKG…QDRM and TQER…KMPF.

This sequence belongs to the YbaB/EbfC family. In terms of assembly, homodimer.

The protein localises to the cytoplasm. Its subcellular location is the nucleoid. In terms of biological role, binds to DNA and alters its conformation. May be involved in regulation of gene expression, nucleoid organization and DNA protection. In Pseudoalteromonas translucida (strain TAC 125), this protein is Nucleoid-associated protein PSHAa1202.